A 591-amino-acid chain; its full sequence is L-fucose isomerase (591 aa).

Catalysis depends on proton acceptor residues glutamate 337 and aspartate 361. 3 residues coordinate Mn(2+): glutamate 337, aspartate 361, and histidine 528.

Belongs to the L-fucose isomerase family. As to quaternary structure, homohexamer. It depends on Mn(2+) as a cofactor.

It is found in the cytoplasm. The catalysed reaction is L-fucose = L-fuculose. It participates in carbohydrate degradation; L-fucose degradation; L-lactaldehyde and glycerone phosphate from L-fucose: step 1/3. Converts the aldose L-fucose into the corresponding ketose L-fuculose. This chain is L-fucose isomerase, found in Salmonella schwarzengrund (strain CVM19633).